Here is a 490-residue protein sequence, read N- to C-terminus: Betaine aldehyde dehydrogenase (490 aa).

Residues isoleucine 27 and aspartate 93 each coordinate K(+). Residue 150–152 (GAW) coordinates NAD(+). The Charge relay system role is filled by lysine 162. Position 176 to 179 (176 to 179 (KPSE)) interacts with NAD(+). A K(+)-binding site is contributed by valine 180. 230–233 (GTDT) provides a ligand contact to NAD(+). Leucine 246 lines the K(+) pocket. Residue glutamate 252 is the Proton acceptor of the active site. NAD(+) is bound by residues glycine 254, cysteine 286, and glutamate 387. Cysteine 286 functions as the Nucleophile in the catalytic mechanism. Cysteine sulfenic acid (-SOH) is present on cysteine 286. K(+)-binding residues include lysine 457 and glycine 460. The Charge relay system role is filled by glutamate 464.

It belongs to the aldehyde dehydrogenase family. As to quaternary structure, dimer of dimers. Requires K(+) as cofactor.

The catalysed reaction is betaine aldehyde + NAD(+) + H2O = glycine betaine + NADH + 2 H(+). The protein operates within amine and polyamine biosynthesis; betaine biosynthesis via choline pathway; betaine from betaine aldehyde: step 1/1. Functionally, involved in the biosynthesis of the osmoprotectant glycine betaine. Catalyzes the irreversible oxidation of betaine aldehyde to the corresponding acid. This is Betaine aldehyde dehydrogenase from Pseudomonas syringae pv. syringae (strain B728a).